We begin with the raw amino-acid sequence, 408 residues long: Aminoacylase-1 (408 aa).

H80 contributes to the Zn(2+) binding site. D82 is an active-site residue. D113 lines the Zn(2+) pocket. The Proton acceptor role is filled by E147. Zn(2+) contacts are provided by E148, E175, and H373.

It belongs to the peptidase M20A family. As to quaternary structure, homodimer. Interacts with SPHK1. Zn(2+) is required as a cofactor.

The protein resides in the cytoplasm. It carries out the reaction an N-acyl-L-amino acid + H2O = an L-alpha-amino acid + a carboxylate. The catalysed reaction is N-acetyl-L-methionine + H2O = L-methionine + acetate. The enzyme catalyses N-acetyl-L-glutamine + H2O = L-glutamine + acetate. Functionally, catalyzes the hydrolysis of N-acetylated amino acids to acetate and free amino acids. This chain is Aminoacylase-1 (Acy1), found in Mus musculus (Mouse).